The sequence spans 751 residues: Cellulose synthase-like protein G3 (751 aa).

The next 2 helical transmembrane spans lie at 47-67 and 72-92; these read IYAV…VHSL and TTLI…MWAT. Catalysis depends on residues D161 and D466. Transmembrane regions (helical) follow at residues 543 to 563, 577 to 597, 617 to 639, 674 to 694, 697 to 717, and 731 to 751; these read CWAF…LALL, FWLY…DFVL, FSSH…THGF, TVAI…FAWG, LVLE…IYEA, and VCFV…VFLK.

Belongs to the glycosyltransferase 2 family. Plant cellulose synthase-like G subfamily.

The protein resides in the golgi apparatus membrane. In terms of biological role, thought to be a Golgi-localized beta-glycan synthase that polymerize the backbones of noncellulosic polysaccharides (hemicelluloses) of plant cell wall. This is Cellulose synthase-like protein G3 (CSLG3) from Arabidopsis thaliana (Mouse-ear cress).